We begin with the raw amino-acid sequence, 334 residues long: MAITVGINGFGRIGRLVLRIALSRKDIQIVAINDPFIAPEYASYMFKYDSTHGRYSGEVSHEGENIVIDGKKIRVYQERDPVNIPWGKDGVDYVIDSTGVFKELDSAQKHIDAGAKKVVITAPSSTAPMFVVGVNEDKYTPDLNIISNASCTTNCLAPLAKIINNKFGIEEGLMTTVHSITATQKTVDGPSHKDWRGGRTASGNIIPSSTGAAKAVGKVIPELAGKLTGMSLRVPTVDVSVVDLTVKLLKDATYDEIKAAVKEAAEGPLKGVVGYTEDQVVSSDFLTDNRSSIFDAEAGIWLSPRFVKLIAWYDNEYGYSTRVVDLLEYVASKN.

Residues 12–13, aspartate 34, and arginine 79 each bind NAD(+); that span reads RI. Residues 150–152, threonine 181, 210–211, and arginine 233 each bind D-glyceraldehyde 3-phosphate; these read SCT and TG. Residue cysteine 151 is the Nucleophile of the active site. Asparagine 315 provides a ligand contact to NAD(+).

This sequence belongs to the glyceraldehyde-3-phosphate dehydrogenase family. Homotetramer.

It is found in the cytoplasm. It carries out the reaction D-glyceraldehyde 3-phosphate + phosphate + NAD(+) = (2R)-3-phospho-glyceroyl phosphate + NADH + H(+). Its pathway is carbohydrate degradation; glycolysis; pyruvate from D-glyceraldehyde 3-phosphate: step 1/5. This chain is Glyceraldehyde-3-phosphate dehydrogenase (GPD), found in Wickerhamomyces ciferrii (strain ATCC 14091 / BCRC 22168 / CBS 111 / JCM 3599 / NBRC 0793 / NRRL Y-1031 F-60-10) (Yeast).